Consider the following 153-residue polypeptide: Large ribosomal subunit protein uL13 (153 aa).

This sequence belongs to the universal ribosomal protein uL13 family. In terms of assembly, part of the 50S ribosomal subunit.

This protein is one of the early assembly proteins of the 50S ribosomal subunit, although it is not seen to bind rRNA by itself. It is important during the early stages of 50S assembly. In Chelativorans sp. (strain BNC1), this protein is Large ribosomal subunit protein uL13.